Reading from the N-terminus, the 272-residue chain is Prephenate dehydratase (272 aa).

The region spanning 4 to 179 is the Prephenate dehydratase domain; it reads AVIYTLPKGT…NKTRFILIGK (176 aa). One can recognise an ACT domain in the interval 194–269; that stretch reads IVFELKEDKP…TFINLLGKYP (76 aa).

As to quaternary structure, homodimer.

It carries out the reaction prephenate + H(+) = 3-phenylpyruvate + CO2 + H2O. The protein operates within amino-acid biosynthesis; L-phenylalanine biosynthesis; phenylpyruvate from prephenate: step 1/1. Inhibited by L-phenylalanine but not by L-tyrosine or L-tryptophan. This is Prephenate dehydratase (pheA) from Methanocaldococcus jannaschii (strain ATCC 43067 / DSM 2661 / JAL-1 / JCM 10045 / NBRC 100440) (Methanococcus jannaschii).